A 249-amino-acid chain; its full sequence is MFKIVYPNAKDFFSFINSITNVTDSIILNFTEDGIFSRHLTEDKVLMAIMRIPKDVLSEYSIDSPTSVKLDVSSVKKILSKASSKKATIELTETDSGLKIIIRDEKSGAKSTIYIKAEKGQVEQLTEPKVNLAVNFTTDESVLNVIAADVTLVGEEMRISTEEDKIKIEAGEEGKRYVAFLMKDKPLKELSIDTSASSSYSAEMFKDAVKGLRGFSAPTMVSFGENLPMKIDVEAVSGGHMIFWIAPRL.

This sequence belongs to the PCNA family. Forms heterodimers with PCNA2, which then recruit PCNA3; does not form homotrimers. The heterodimers interact with RfcS homotetramers. Heterotrimer which circularizes head-to-tail (head is at N-terminus, tail is at C-terminus) to form a toroid; DNA passes through its center. Replication factor C (RFC) is required to load the toroid on the DNA. Heterotrimer interacts, probably via this subunit, with flap endonuclease 1 (fen), Hjc, Dpo4, and XPF.

In terms of biological role, one of the sliding clamp subunits that acts as a moving platform for DNA processing. Responsible for tethering the catalytic subunit of DNA polymerase to DNA during high-speed replication. Heterotrimer stimulates the Holliday junction resolvase Hjc. DNA polymerase I, DNA ligase and the flap endonuclease may be constitutively associated with the PCNA heterotrimer forming a scanning complex able to couple DNA synthesis and Okazaki fragment maturation. This chain is DNA polymerase sliding clamp 1, found in Saccharolobus solfataricus (strain ATCC 35092 / DSM 1617 / JCM 11322 / P2) (Sulfolobus solfataricus).